Reading from the N-terminus, the 45-residue chain is MIMGKDRQEKKLKASGRVESDRDQSIHYDGATSLEQNGRFKKRKS.

Residues 1 to 26 show a composition bias toward basic and acidic residues; the sequence is MIMGKDRQEKKLKASGRVESDRDQSI. The disordered stretch occupies residues 1–45; it reads MIMGKDRQEKKLKASGRVESDRDQSIHYDGATSLEQNGRFKKRKS.

This is an uncharacterized protein from Bacillus subtilis (strain 168).